The chain runs to 341 residues: MLVLGLETSCDETGVALYDSERGLLADALFSQIDLHRAYGGVVPELASRDHVKRMLPLIRQTLAEADCVATDIDAIAYTAGPGLVGALLVGASCAQALAFAWDIPALGVHHMEGHLLAPMLEENPPQFPFVALLVSGGHTQLVRVDGIGQYELLGETLDDAAGEAFDKTAKMMGMQYPGGPEISKAALQGVPGRFVFPRPMTDRPGLAFSFSGLKTSALNTWQQCQSAGDDSEQTRCDIALAFQQAVVETLTIKCKRALKQTGLKSLVIAGGVSANKALRVSLESMLGELRGHVYYARPEFCTDNGAMIAFAGCQRLQAGQKEDLSISVQARWPMEQLSGL.

His111 and His115 together coordinate Fe cation. Residues 134–138 (LVSGG), Asp167, Gly180, and Asn276 each bind substrate. Position 304 (Asp304) interacts with Fe cation.

This sequence belongs to the KAE1 / TsaD family. The cofactor is Fe(2+).

Its subcellular location is the cytoplasm. It carries out the reaction L-threonylcarbamoyladenylate + adenosine(37) in tRNA = N(6)-L-threonylcarbamoyladenosine(37) in tRNA + AMP + H(+). Required for the formation of a threonylcarbamoyl group on adenosine at position 37 (t(6)A37) in tRNAs that read codons beginning with adenine. Is involved in the transfer of the threonylcarbamoyl moiety of threonylcarbamoyl-AMP (TC-AMP) to the N6 group of A37, together with TsaE and TsaB. TsaD likely plays a direct catalytic role in this reaction. The protein is tRNA N6-adenosine threonylcarbamoyltransferase of Pseudomonas syringae pv. tomato (strain ATCC BAA-871 / DC3000).